Consider the following 299-residue polypeptide: ATP synthase gamma chain (299 aa).

It belongs to the ATPase gamma chain family. As to quaternary structure, F-type ATPases have 2 components, CF(1) - the catalytic core - and CF(0) - the membrane proton channel. CF(1) has five subunits: alpha(3), beta(3), gamma(1), delta(1), epsilon(1). CF(0) has three main subunits: a, b and c.

The protein resides in the cell membrane. Its function is as follows. Produces ATP from ADP in the presence of a proton gradient across the membrane. The gamma chain is believed to be important in regulating ATPase activity and the flow of protons through the CF(0) complex. The polypeptide is ATP synthase gamma chain (Clavibacter sepedonicus (Clavibacter michiganensis subsp. sepedonicus)).